Reading from the N-terminus, the 957-residue chain is Mediator of RNA polymerase II transcription subunit 16 (957 aa).

Residues 855 to 883 (YTEVDAAPSGKTNAQGPPQQPQPQQQRRR) form a disordered region.

This sequence belongs to the Mediator complex subunit 16 family. In terms of assembly, component of the Mediator complex.

Its subcellular location is the nucleus. In terms of biological role, component of the Mediator complex, a coactivator involved in the regulated transcription of nearly all RNA polymerase II-dependent genes. Mediator functions as a bridge to convey information from gene-specific regulatory proteins to the basal RNA polymerase II transcription machinery. Mediator is recruited to promoters by direct interactions with regulatory proteins and serves as a scaffold for the assembly of a functional preinitiation complex with RNA polymerase II and the general transcription factors. This Aspergillus clavatus (strain ATCC 1007 / CBS 513.65 / DSM 816 / NCTC 3887 / NRRL 1 / QM 1276 / 107) protein is Mediator of RNA polymerase II transcription subunit 16 (sin4).